The sequence spans 227 residues: 2,3-bisphosphoglycerate-dependent phosphoglycerate mutase (227 aa).

Substrate-binding positions include 8 to 15, 21 to 22, R58, 110 to 113, K121, 137 to 138, and 181 to 182; these read RHGKSVWN, TG, ERMY, RR, and GN. H9 functions as the Tele-phosphohistidine intermediate in the catalytic mechanism. The active-site Proton donor/acceptor is the E110.

This sequence belongs to the phosphoglycerate mutase family. BPG-dependent PGAM subfamily.

It carries out the reaction (2R)-2-phosphoglycerate = (2R)-3-phosphoglycerate. The protein operates within carbohydrate degradation; glycolysis; pyruvate from D-glyceraldehyde 3-phosphate: step 3/5. Catalyzes the interconversion of 2-phosphoglycerate and 3-phosphoglycerate. The protein is 2,3-bisphosphoglycerate-dependent phosphoglycerate mutase of Chlamydia caviae (strain ATCC VR-813 / DSM 19441 / 03DC25 / GPIC) (Chlamydophila caviae).